The primary structure comprises 319 residues: Acetyl-coenzyme A carboxylase carboxyl transferase subunit alpha (319 aa).

Positions 35-296 (NIDEEVHRLR…KAQLLEDLAD (262 aa)) constitute a CoA carboxyltransferase C-terminal domain.

It belongs to the AccA family. Acetyl-CoA carboxylase is a heterohexamer composed of biotin carboxyl carrier protein (AccB), biotin carboxylase (AccC) and two subunits each of ACCase subunit alpha (AccA) and ACCase subunit beta (AccD).

It is found in the cytoplasm. The catalysed reaction is N(6)-carboxybiotinyl-L-lysyl-[protein] + acetyl-CoA = N(6)-biotinyl-L-lysyl-[protein] + malonyl-CoA. It participates in lipid metabolism; malonyl-CoA biosynthesis; malonyl-CoA from acetyl-CoA: step 1/1. Functionally, component of the acetyl coenzyme A carboxylase (ACC) complex. First, biotin carboxylase catalyzes the carboxylation of biotin on its carrier protein (BCCP) and then the CO(2) group is transferred by the carboxyltransferase to acetyl-CoA to form malonyl-CoA. In Salmonella dublin (strain CT_02021853), this protein is Acetyl-coenzyme A carboxylase carboxyl transferase subunit alpha.